A 155-amino-acid polypeptide reads, in one-letter code: Large ribosomal subunit protein uL22 (155 aa).

This sequence belongs to the universal ribosomal protein uL22 family. In terms of assembly, part of the 50S ribosomal subunit.

In terms of biological role, this protein binds specifically to 23S rRNA. It makes multiple contacts with different domains of the 23S rRNA in the assembled 50S subunit and ribosome. Functionally, the globular domain of the protein is located near the polypeptide exit tunnel on the outside of the subunit, while an extended beta-hairpin is found that lines the wall of the exit tunnel in the center of the 70S ribosome. The polypeptide is Large ribosomal subunit protein uL22 (Pyrococcus furiosus (strain ATCC 43587 / DSM 3638 / JCM 8422 / Vc1)).